The primary structure comprises 152 residues: D-aminoacyl-tRNA deacylase (152 aa).

The short motif at 142-143 (GP) is the Gly-cisPro motif, important for rejection of L-amino acids element.

Belongs to the DTD family. As to quaternary structure, homodimer.

It localises to the cytoplasm. It carries out the reaction glycyl-tRNA(Ala) + H2O = tRNA(Ala) + glycine + H(+). The catalysed reaction is a D-aminoacyl-tRNA + H2O = a tRNA + a D-alpha-amino acid + H(+). In terms of biological role, an aminoacyl-tRNA editing enzyme that deacylates mischarged D-aminoacyl-tRNAs. Also deacylates mischarged glycyl-tRNA(Ala), protecting cells against glycine mischarging by AlaRS. Acts via tRNA-based rather than protein-based catalysis; rejects L-amino acids rather than detecting D-amino acids in the active site. By recycling D-aminoacyl-tRNA to D-amino acids and free tRNA molecules, this enzyme counteracts the toxicity associated with the formation of D-aminoacyl-tRNA entities in vivo and helps enforce protein L-homochirality. In Burkholderia ambifaria (strain ATCC BAA-244 / DSM 16087 / CCUG 44356 / LMG 19182 / AMMD) (Burkholderia cepacia (strain AMMD)), this protein is D-aminoacyl-tRNA deacylase.